The following is a 109-amino-acid chain: Fluoride-specific ion channel FluC 1 (109 aa).

The next 4 membrane-spanning stretches (helical) occupy residues 1-21, 29-49, 55-75, and 87-107; these read MVIVYLAIACGLGALVRYFFS, LPLGTLIANLLGCFLIGVFYN, EVYAILATGFCGGLTTFSTLN, and VFYSYLTLTYIGGLVAIFLGI. The Na(+) site is built by glycine 66 and threonine 69.

Belongs to the fluoride channel Fluc/FEX (TC 1.A.43) family.

Its subcellular location is the cell membrane. It catalyses the reaction fluoride(in) = fluoride(out). With respect to regulation, na(+) is not transported, but it plays an essential structural role and its presence is essential for fluoride channel function. In terms of biological role, fluoride-specific ion channel. Important for reducing fluoride concentration in the cell, thus reducing its toxicity. In Streptococcus pneumoniae serotype 4 (strain ATCC BAA-334 / TIGR4), this protein is Fluoride-specific ion channel FluC 1.